The chain runs to 202 residues: Small ribosomal subunit protein uS4 (202 aa).

The interval 23–42 (RKNARRAYAPGQHGQARKKR) is disordered. The S4 RNA-binding domain maps to 90-153 (MRLDNTVFRL…RSQDLVKRNM (64 aa)).

The protein belongs to the universal ribosomal protein uS4 family. Part of the 30S ribosomal subunit. Contacts protein S5. The interaction surface between S4 and S5 is involved in control of translational fidelity.

In terms of biological role, one of the primary rRNA binding proteins, it binds directly to 16S rRNA where it nucleates assembly of the body of the 30S subunit. With S5 and S12 plays an important role in translational accuracy. In Microcystis aeruginosa (strain NIES-843 / IAM M-2473), this protein is Small ribosomal subunit protein uS4.